The primary structure comprises 259 residues: Undecaprenyl-diphosphatase 4 (259 aa).

8 helical membrane-spanning segments follow: residues 1-21, 39-59, 71-91, 99-119, 133-153, 173-193, 208-228, and 239-259; these read MNWL…FLPI, AGLF…FIYY, FSKL…IGLL, ISKT…FLYM, ITYK…FPAI, AAYF…ILQF, SLIV…SWMI, and FAYY…THVF.

The protein belongs to the UppP family.

It is found in the cell membrane. The catalysed reaction is di-trans,octa-cis-undecaprenyl diphosphate + H2O = di-trans,octa-cis-undecaprenyl phosphate + phosphate + H(+). Its function is as follows. Catalyzes the dephosphorylation of undecaprenyl diphosphate (UPP). Confers resistance to bacitracin. The polypeptide is Undecaprenyl-diphosphatase 4 (Bacillus thuringiensis (strain Al Hakam)).